We begin with the raw amino-acid sequence, 528 residues long: Xylose import ATP-binding protein XylG (528 aa).

ABC transporter domains follow at residues 6 to 245 (LQMN…VGRE) and 262 to 507 (FEAR…LSHP). 38-45 (GENGAGKS) serves as a coordination point for ATP. The segment at 504–528 (LSHPGDPDSNDPANNNHNDNDRKTT) is disordered.

The protein belongs to the ABC transporter superfamily. Xylose importer (TC 3.A.1.2.4) family. The complex is composed of two ATP-binding proteins (XylG), two transmembrane proteins (XylH) and a solute-binding protein (XylF).

It localises to the cell inner membrane. It catalyses the reaction D-xylose(out) + ATP + H2O = D-xylose(in) + ADP + phosphate + H(+). Its function is as follows. Part of the ABC transporter complex XylFGH involved in xylose import. Responsible for energy coupling to the transport system. The polypeptide is Xylose import ATP-binding protein XylG (Pseudomonas syringae pv. tomato (strain ATCC BAA-871 / DC3000)).